Consider the following 208-residue polypeptide: Small ribosomal subunit protein uS4 (208 aa).

Residues 98–160 form the S4 RNA-binding domain; that stretch reads CRLDNVVYRM…AKKQSRIQLA (63 aa).

It belongs to the universal ribosomal protein uS4 family. As to quaternary structure, part of the 30S ribosomal subunit. Contacts protein S5. The interaction surface between S4 and S5 is involved in control of translational fidelity.

One of the primary rRNA binding proteins, it binds directly to 16S rRNA where it nucleates assembly of the body of the 30S subunit. In terms of biological role, with S5 and S12 plays an important role in translational accuracy. The protein is Small ribosomal subunit protein uS4 of Vesicomyosocius okutanii subsp. Calyptogena okutanii (strain HA).